We begin with the raw amino-acid sequence, 1194 residues long: MASSQRRGPTTKTPAVVGLTALRNCLVNLPSGLVSVLVSSNTPAQNVVVELSWRVKAPPQAGPLTGPATITRQAFAGWTGMPSKRQPLQPQGAGSFPGSQRSNSLEGCVEIDSAFARNVGLTEGSKVNILLHVDPPTTHTIHIEPLTASDWEIIELHATFLELNLLSQIRAITFAHPLTVYLSPTSTASIKVARIEPEDAASAFGFAKIAPNAEVIVAPKTRQRRMSHQGKSVKAKSLASTRHGKRRDDGSGPSGGGPVFFRAISLPHESFDAAEEQKGAYCVYLDPEVLAIPALRGCAFVGVVVVRPPGLAPPPDANQANNDVGGSTSPDAPEVIKPSLKIVAKLLPWKNAPDLKHIAISNLLADALDIKNVVGCVIRIEAAHQQLPKGSTTKVIIRPYSAGTLSSSAASEQSSLRWSGKDWKSDLAVRRVKEVLSQKTVWGEDILGGPLSDRLVLPAIPDSPLFAGGILLLDGSEVKHGWILGGDRKYILELGSEITTSRPHVPLSISETALPVLPPGRIVGVDKAINTASNILTRSASVLLTGARGSGKTSLVSVITSILKKKHFFHVLPISCAKFADERLQTIKDTFSRAIAEAKWFSPTVIVFDDLDRLIPAEVEHADSTRSRYIAEAFGKAIRDLKSSVLGPGNVVILATVQAKESVNSLIVGGHIFREIITLKAPNKAGRRQVLEQAVGGLSDEKSSPDTSSIRVKNPAALTNGPEPTLKIEKGLELLDIAGMTDGYMPADLQLLVGRARHEAIVRAVESGSDDAEADLVLGKKDFDKAIKGFVPAGLRGVKLQTSGAAWKDIGGLTETRKILLETLEWPTRYAPIFANCPLRLRSGLLLYGYPGCGKTLLASAVAGECGLNFISVKGPEILNKYIGASEKSVRDLFERASAAKPCVLFFDEFDSIAPKRGHDSTGVTDRVVNQMLTQMDGAEGLDGVYVLAATSRPDLIDPALLRPGRLDKSLLCDLPNLEDRVDILRALSLKLKIEESIGLEDIANLTEGYSGADLQAVLYNAHLEAIHDVIASQDEEVERFGNGGKGKGKVDAGSGNDSIDYISFSMGNKDSTGEPSTQPLTNGTQAARTKFAERAAVMAKLDKLKKIVQGDAAKQVQQQQSQTNQAQEEEKGDDEPVINWKHLQSSLKSTRPSIAPDERKRLFRIYNEFIVGRSGEMPSGQSSTEIGGRSSLM.

The interval 220–255 is disordered; sequence KTRQRRMSHQGKSVKAKSLASTRHGKRRDDGSGPSG. The segment covering 221 to 234 has biased composition (basic residues); it reads TRQRRMSHQGKSVK. The segment at 538–730 is AAA-cassette D1; the sequence is RSASVLLTGA…GPEPTLKIEK (193 aa). ATP-binding positions include 546 to 553 and 849 to 856; these read GARGSGKT and GYPGCGKT. Residues 844-1028 are AAA-cassette D2; that stretch reads GLLLYGYPGC…LYNAHLEAIH (185 aa). 3 disordered regions span residues 1062 to 1084, 1116 to 1139, and 1174 to 1194; these read YISF…LTNG, QVQQ…EPVI, and RSGE…SSLM. Residues 1066-1084 are compositionally biased toward polar residues; sequence SMGNKDSTGEPSTQPLTNG. The segment covering 1116 to 1127 has biased composition (low complexity); the sequence is QVQQQQSQTNQA.

It belongs to the AAA ATPase family. As to quaternary structure, interacts with PEX6; forming the PEX1-PEX6 AAA ATPase complex, which is composed of a heterohexamer formed by a trimer of PEX1-PEX6 dimers.

It is found in the cytoplasm. It localises to the cytosol. The protein resides in the peroxisome membrane. It catalyses the reaction ATP + H2O = ADP + phosphate + H(+). Component of the PEX1-PEX6 AAA ATPase complex, a protein dislocase complex that mediates the ATP-dependent extraction of the PEX5 receptor from peroxisomal membranes, an essential step for PEX5 recycling. Specifically recognizes PEX5 monoubiquitinated at 'Cys-6', and pulls it out of the peroxisome lumen through the PEX2-PEX10-PEX12 retrotranslocation channel. Extraction by the PEX1-PEX6 AAA ATPase complex is accompanied by unfolding of the TPR repeats and release of bound cargo from PEX5. Regulates autophagy and biogenesis of peroxisomes and Woronin bodies. Plays important roles in mycelial growth and development and stress response. Is also essential for conidiation and fatty acid utilization. Required for nematode predation via trap formation. This is Peroxisomal ATPase PEX1 from Arthrobotrys oligospora (strain ATCC 24927 / CBS 115.81 / DSM 1491) (Nematode-trapping fungus).